The chain runs to 366 residues: Prostaglandin F2-alpha receptor (366 aa).

The Extracellular segment spans residues 1-31; the sequence is MSINSSKQPASSAAGLIANTTCQTENRLSVF. Asn4 and Asn19 each carry an N-linked (GlcNAc...) asparagine glycan. Residues 32 to 55 traverse the membrane as a helical segment; that stretch reads FSIIFMTVGIVSNSLAIAILMKAY. The Cytoplasmic portion of the chain corresponds to 56 to 69; that stretch reads QRFRRKSKASFLLL. Residues 70 to 90 traverse the membrane as a helical segment; sequence ASGLVITDFFGHLINGGIAVF. Over 91–109 the chain is Extracellular; that stretch reads VYASDKDWIRFDQSNILCS. An intrachain disulfide couples Cys108 to Cys186. The chain crosses the membrane as a helical span at residues 110–131; the sequence is VFGISMVFSGLCPLFLGSTMAI. Over 132–152 the chain is Cytoplasmic; it reads ERCIGVTNPLFHSTKITSKHV. Residues 153–175 form a helical membrane-spanning segment; that stretch reads KMILSGVCMFAVFVALLPILGHR. Residues 176–198 are Extracellular-facing; sequence DYQIQASRTWCFYNTEHIEDWED. Residues 199–224 form a helical membrane-spanning segment; the sequence is RFYLLFFSSLGLLALGISFSCNAVTG. Over 225 to 250 the chain is Cytoplasmic; the sequence is VTLLRVKFRSQQHRQGRSHHLEMVIQ. A helical transmembrane segment spans residues 251-267; sequence LLAIMCVSCVCWSPFLV. Over 268–285 the chain is Extracellular; it reads TMANIAINGNNSPVTCET. Residues 286–307 form a helical membrane-spanning segment; the sequence is TLFALRMATWNQILDPWVYILL. Topologically, residues 308–366 are cytoplasmic; it reads RKAVLRNLYKLASRCCGVNIISLHIWELSSIKNSLKVAAISESPAAEKENQQASSEAGL.

It belongs to the G-protein coupled receptor 1 family. Highest expression in pregnant ovary. Also found in a low extent in the kidney. In the brain, expressed in astrocytes and oligodendrocytes, and meningeal fibroblasts, but not in migroglia cells.

Its subcellular location is the cell membrane. Receptor for prostaglandin F2-alpha (PGF2-alpha). The activity of this receptor is mediated by G proteins which activate a phosphatidylinositol-calcium second messenger system. Initiates luteolysis in the corpus luteum. The chain is Prostaglandin F2-alpha receptor (Ptgfr) from Rattus norvegicus (Rat).